The following is a 79-amino-acid chain: MSDFWHKLGCCVVEKPQPKKKRKRIDRSMIGEPMNFVHLTHIGSGDMGASDGLPRAGGVQEQMRSKCGRDRQWSNSGVL.

Residues C10 and C11 are each lipidated (S-palmitoyl cysteine). The CRIB domain occupies I30–G43. Residues H41–L79 are disordered. Positions M63 to Q72 are enriched in basic and acidic residues.

It belongs to the CDC42SE/SPEC family.

It is found in the cytoplasm. It localises to the cytoskeleton. Its subcellular location is the cell membrane. Functionally, probably involved in the organization of the actin cytoskeleton by acting downstream of CDC42, inducing actin filament assembly. This Xenopus tropicalis (Western clawed frog) protein is CDC42 small effector protein 1 (cdc42se1).